The sequence spans 308 residues: uncharacterized protein (308 aa).

Residues 191-211 traverse the membrane as a helical segment; the sequence is YLCLNLPYIIVALTLVPYSLV.

It is found in the host membrane. This is an uncharacterized protein from Saccharolobus islandicus (Sulfolobus islandicus).